An 89-amino-acid chain; its full sequence is MSLASAETAKIVKEYQLGKDDTGSPEVQVAILTAKIIKLTDHMKAHKHDHHSRRGLLRMVSQRRKLLNFLKRNDLQRYLKLIERLGLRS.

This sequence belongs to the universal ribosomal protein uS15 family. As to quaternary structure, part of the 30S ribosomal subunit. Forms a bridge to the 50S subunit in the 70S ribosome, contacting the 23S rRNA.

Functionally, one of the primary rRNA binding proteins, it binds directly to 16S rRNA where it helps nucleate assembly of the platform of the 30S subunit by binding and bridging several RNA helices of the 16S rRNA. Its function is as follows. Forms an intersubunit bridge (bridge B4) with the 23S rRNA of the 50S subunit in the ribosome. This is Small ribosomal subunit protein uS15 from Coxiella burnetii (strain CbuK_Q154) (Coxiella burnetii (strain Q154)).